Reading from the N-terminus, the 314-residue chain is Homeobox protein SIX3 (314 aa).

A DNA-binding region (homeobox) is located at residues 188–247 (GEQKTHCFKERTRSLLREWYLQDPYPNPSKKRELAQATGLTPTQVGNWFKNRRQRDRAAA). 2 disordered regions span residues 214-233 (NPSKKRELAQATGLTPTQVG) and 240-314 (RQRD…ECDV). The span at 271 to 293 (PTHSSAESPSTAASPTTSVSSLT) shows a compositional bias: low complexity. A compositionally biased stretch (polar residues) spans 298–314 (TGTSILSVTSSDSECDV).

This sequence belongs to the SIX/Sine oculis homeobox family.

It is found in the nucleus. In terms of biological role, transcriptional regulator which can act as both a transcriptional repressor and activator by binding a ATTA homeodomain core recognition sequence on these target genes. During forebrain development represses WNT1 expression allowing zona limitans intrathalamica formation and thereby ensuring proper anterio-posterior patterning of the diencephalon and formation of the rostral diencephalon. Acts as a direct upstream activator of SHH expression in the rostral diencephalon ventral midline and that in turn SHH maintains its expression. In addition, Six3 activity is required for the formation of the telencephalon. During postnatal stages of brain development is necessary for ependymal cell maturation by promoting the maturation of radial glia into ependymal cells through regulation of neuroblast proliferation and migration. Acts on the proliferation and differentiation of neural progenitor cells through activating transcription of CCND1 and CCND2. During early lens formation plays a role in lens induction and specification by activating directly PAX6 in the presumptive lens ectoderm. In turn PAX6 activates SIX3 resulting in activation of PDGFRA and CCND1 promoting cell proliferation. Also is required for the neuroretina development by directly suppressing WNT8B expression in the anterior neural plate territory. Its action during retina development and lens morphogenesis is AES and TLE4-dependent manner. Furthermore, during eye development regulates several genes expression. Before and during early lens development represses the CRYGF promoter by binding a SIX repressor element. Directly activates RHO transcription, or cooperates with CRX or NRL. Six3 also functions in the formation of the proximodistal axis of the optic cup, and promotes the formation of optic vesicles-like structures. During pituitary development, acts in parallel or alternatively with HESX1 to control cell proliferation through Wnt/beta-catenin pathway. Plays a role in eye development by suppressing WNT1 expression and in dorsal-ventral patterning by repressing BMP signaling pathway. The sequence is that of Homeobox protein SIX3 (SIX3) from Gallus gallus (Chicken).